A 547-amino-acid polypeptide reads, in one-letter code: Chaperonin GroEL (547 aa).

ATP contacts are provided by residues 30–33 (TLGP), lysine 51, 87–91 (DGTTT), glycine 415, and aspartate 496. Positions 528-547 (KEGAGAGGGMPDMGGMGGMM) are disordered. A compositionally biased stretch (gly residues) spans 531 to 547 (AGAGGGMPDMGGMGGMM).

It belongs to the chaperonin (HSP60) family. As to quaternary structure, forms a cylinder of 14 subunits composed of two heptameric rings stacked back-to-back. Interacts with the co-chaperonin GroES.

The protein resides in the cytoplasm. The enzyme catalyses ATP + H2O + a folded polypeptide = ADP + phosphate + an unfolded polypeptide.. In terms of biological role, together with its co-chaperonin GroES, plays an essential role in assisting protein folding. The GroEL-GroES system forms a nano-cage that allows encapsulation of the non-native substrate proteins and provides a physical environment optimized to promote and accelerate protein folding. This is Chaperonin GroEL from Dinoroseobacter shibae (strain DSM 16493 / NCIMB 14021 / DFL 12).